The following is a 350-amino-acid chain: Opsin, longwave 563 nm (350 aa).

Residues 1–45 lie on the Extracellular side of the membrane; it reads HRLAGRHPQDNYEDSTQSSIFTYTNSNSTRGPFEGPNYHIAPRWV. N-linked (GlcNAc...) asparagine glycosylation is present at Asn27. The helical transmembrane segment at 46 to 70 threads the bilayer; the sequence is YHLTSVWMLFVVVASVFTNGLVLAA. The Cytoplasmic segment spans residues 71–82; sequence TMKFKKLRHPLN. The chain crosses the membrane as a helical span at residues 83–108; sequence WILVNLAIADLAETVIASTISVVNQV. The Extracellular portion of the chain corresponds to 109–122; sequence HGYFVLGHPMCVLE. An intrachain disulfide couples Cys119 to Cys196. The helical transmembrane segment at 123–142 threads the bilayer; sequence GYTVSLCGITGLWSLAIISW. Over 143–161 the chain is Cytoplasmic; it reads ERWLVVCKPFGNVRFDAKL. A helical membrane pass occupies residues 162 to 185; sequence AIVGVAFSWIWSAVWTAPPIFGWS. At 186–211 the chain is on the extracellular side; the sequence is RYWPHGLKTSCGPDVFSGSSYPGVQS. Residues 212 to 239 form a helical membrane-spanning segment; it reads YMIVLMITCCFLPLGIIVLCYLQVWLAI. Residues 240 to 261 lie on the Cytoplasmic side of the membrane; that stretch reads RAVAKQQKESESTQKAEKEVTR. Residues 262–285 form a helical membrane-spanning segment; sequence MVVVMIVAYCVCWGPYTFFACFAA. Topologically, residues 286 to 293 are extracellular; that stretch reads ANPGYAFH. The helical transmembrane segment at 294–318 threads the bilayer; it reads PLMAALPAYFAKSATIYNPIIYVFM. Lys305 carries the N6-(retinylidene)lysine modification. Residues 319–350 lie on the Cytoplasmic side of the membrane; it reads NRQFRNCILQLFGKKVDDGSELSSASKTEVSS.

Belongs to the G-protein coupled receptor 1 family. Opsin subfamily. Phosphorylated on some or all of the serine and threonine residues present in the C-terminal region. The color pigments are found in the cone photoreceptor cells.

It is found in the membrane. In terms of biological role, visual pigments are the light-absorbing molecules that mediate vision. They consist of an apoprotein, opsin, covalently linked to cis-retinal. This is Opsin, longwave 563 nm from Callithrix jacchus (White-tufted-ear marmoset).